The chain runs to 669 residues: UvrABC system protein B (669 aa).

The 389-residue stretch at 26–414 (TNFHAGIAKQ…AGEVIELLVR (389 aa)) folds into the Helicase ATP-binding domain. Residue 39–46 (GVTGSGKT) coordinates ATP. A Beta-hairpin motif is present at residues 92-115 (YYDYYQPEAYVPASDTFIEKDSSI). In terms of domain architecture, Helicase C-terminal spans 435 to 597 (LISQINVCIK…SVVRPISDIL (163 aa)). The 36-residue stretch at 631–666 (AAQMKVLEQQMYQHARDLEFEDAARIRDQIQRLREA) folds into the UVR domain.

The protein belongs to the UvrB family. In terms of assembly, forms a heterotetramer with UvrA during the search for lesions. Interacts with UvrC in an incision complex.

It is found in the cytoplasm. In terms of biological role, the UvrABC repair system catalyzes the recognition and processing of DNA lesions. A damage recognition complex composed of 2 UvrA and 2 UvrB subunits scans DNA for abnormalities. Upon binding of the UvrA(2)B(2) complex to a putative damaged site, the DNA wraps around one UvrB monomer. DNA wrap is dependent on ATP binding by UvrB and probably causes local melting of the DNA helix, facilitating insertion of UvrB beta-hairpin between the DNA strands. Then UvrB probes one DNA strand for the presence of a lesion. If a lesion is found the UvrA subunits dissociate and the UvrB-DNA preincision complex is formed. This complex is subsequently bound by UvrC and the second UvrB is released. If no lesion is found, the DNA wraps around the other UvrB subunit that will check the other stand for damage. The chain is UvrABC system protein B from Xylella fastidiosa (strain 9a5c).